Consider the following 368-residue polypeptide: Isopentenyl-diphosphate delta-isomerase (368 aa).

Arg7–Lys8 provides a ligand contact to substrate. Residues Thr65, Gly66–Thr68, Ser96, and Asn125 contribute to the FMN site. Ser96 to Arg98 is a binding site for substrate. Gln160 contacts substrate. Mg(2+) is bound at residue Glu161. FMN is bound by residues Lys193, Ser218, Thr223, Gly275–Arg277, and Ala296–Leu297.

The protein belongs to the IPP isomerase type 2 family. As to quaternary structure, homooctamer. Dimer of tetramers. Requires FMN as cofactor. It depends on NADPH as a cofactor. Mg(2+) serves as cofactor.

The protein resides in the cytoplasm. The catalysed reaction is isopentenyl diphosphate = dimethylallyl diphosphate. In terms of biological role, involved in the biosynthesis of isoprenoids. Catalyzes the 1,3-allylic rearrangement of the homoallylic substrate isopentenyl (IPP) to its allylic isomer, dimethylallyl diphosphate (DMAPP). This Saccharolobus solfataricus (strain ATCC 35092 / DSM 1617 / JCM 11322 / P2) (Sulfolobus solfataricus) protein is Isopentenyl-diphosphate delta-isomerase.